The primary structure comprises 288 residues: MAFSGSSRTLTQQSSAASTDDLHKILFSPEAIKEMATKCDLGRHHWLRADDAVCVRPLVPETTSNKVAQWFKTGYEAGKLPSKGYMIIPQVLCAVTRTVTSNAEGSLEIYLADLGDVELAPIDDQVVTLHNRDLPALISFQPTYDCPMEKVGDRSRCFAVVIKRHGYLGHPGSTASVCSNWQPKFSSKNNNYKPAAAGKTLVLPYNRLSELSGPSAVVRLLKSQLNMQSSPLFQLPGGPIMQKAIGSEREEGLNCKRKLPLEEVCTTSRDSVSSRPSVVNGIERPGTL.

This sequence belongs to the cucumovirus movement protein family.

It localises to the host cell junction. It is found in the host plasmodesma. Its function is as follows. Transports viral genome to neighboring plant cells directly through plasmosdesmata, without any budding. The movement protein allows efficient cell to cell propagation, by bypassing the host cell wall barrier. Acts by forming a tubular structure at the host plasmodesmata, enlarging it enough to allow free passage of virion capsids. The chain is Movement protein from Apium graveolens (Celery).